The primary structure comprises 598 residues: DNA mismatch repair protein MutL (598 aa).

It belongs to the DNA mismatch repair MutL/HexB family.

Its function is as follows. This protein is involved in the repair of mismatches in DNA. It is required for dam-dependent methyl-directed DNA mismatch repair. May act as a 'molecular matchmaker', a protein that promotes the formation of a stable complex between two or more DNA-binding proteins in an ATP-dependent manner without itself being part of a final effector complex. This chain is DNA mismatch repair protein MutL, found in Thiobacillus denitrificans (strain ATCC 25259 / T1).